Reading from the N-terminus, the 282-residue chain is Pantothenate synthetase (282 aa).

ATP is bound at residue 30-37; it reads MGYLHEGH. Histidine 37 functions as the Proton donor in the catalytic mechanism. Glutamine 61 lines the (R)-pantoate pocket. Glutamine 61 contributes to the beta-alanine binding site. Residue 147–150 participates in ATP binding; it reads GMKD. Glutamine 153 serves as a coordination point for (R)-pantoate. ATP is bound by residues valine 176 and 184 to 187; that span reads KSSR.

It belongs to the pantothenate synthetase family. As to quaternary structure, homodimer.

It is found in the cytoplasm. It catalyses the reaction (R)-pantoate + beta-alanine + ATP = (R)-pantothenate + AMP + diphosphate + H(+). The protein operates within cofactor biosynthesis; (R)-pantothenate biosynthesis; (R)-pantothenate from (R)-pantoate and beta-alanine: step 1/1. In terms of biological role, catalyzes the condensation of pantoate with beta-alanine in an ATP-dependent reaction via a pantoyl-adenylate intermediate. The polypeptide is Pantothenate synthetase (Bacillus cereus (strain B4264)).